Reading from the N-terminus, the 257-residue chain is Ditrans,polycis-undecaprenyl-diphosphate synthase ((2E,6E)-farnesyl-diphosphate specific) (257 aa).

Asp24 is an active-site residue. Asp24 provides a ligand contact to Mg(2+). Substrate contacts are provided by residues 25–28 (GNGR), Trp29, Arg37, His41, and 69–71 (SSE). Catalysis depends on Asn72, which acts as the Proton acceptor. Residues Trp73, Arg75, Arg192, and 198–200 (RIS) contribute to the substrate site. Mg(2+) is bound at residue Glu211.

It belongs to the UPP synthase family. In terms of assembly, homodimer. Mg(2+) is required as a cofactor.

It catalyses the reaction 8 isopentenyl diphosphate + (2E,6E)-farnesyl diphosphate = di-trans,octa-cis-undecaprenyl diphosphate + 8 diphosphate. Functionally, catalyzes the sequential condensation of isopentenyl diphosphate (IPP) with (2E,6E)-farnesyl diphosphate (E,E-FPP) to yield (2Z,6Z,10Z,14Z,18Z,22Z,26Z,30Z,34E,38E)-undecaprenyl diphosphate (di-trans,octa-cis-UPP). UPP is the precursor of glycosyl carrier lipid in the biosynthesis of bacterial cell wall polysaccharide components such as peptidoglycan and lipopolysaccharide. The sequence is that of Ditrans,polycis-undecaprenyl-diphosphate synthase ((2E,6E)-farnesyl-diphosphate specific) from Aliivibrio fischeri (strain ATCC 700601 / ES114) (Vibrio fischeri).